Consider the following 204-residue polypeptide: LexA repressor (204 aa).

The H-T-H motif DNA-binding region spans 28-48 (VREIGQAVGLASSSTVHGHLS). Residues Ser126 and Lys164 each act as for autocatalytic cleavage activity in the active site.

It belongs to the peptidase S24 family. As to quaternary structure, homodimer.

It carries out the reaction Hydrolysis of Ala-|-Gly bond in repressor LexA.. Represses a number of genes involved in the response to DNA damage (SOS response), including recA and lexA. In the presence of single-stranded DNA, RecA interacts with LexA causing an autocatalytic cleavage which disrupts the DNA-binding part of LexA, leading to derepression of the SOS regulon and eventually DNA repair. This Bacillus mycoides (strain KBAB4) (Bacillus weihenstephanensis) protein is LexA repressor.